The primary structure comprises 245 residues: 1-(5-phosphoribosyl)-5-[(5-phosphoribosylamino)methylideneamino] imidazole-4-carboxamide isomerase (245 aa).

Residue Asp-7 is the Proton acceptor of the active site. The active-site Proton donor is the Asp-129.

Belongs to the HisA/HisF family.

The protein localises to the cytoplasm. It catalyses the reaction 1-(5-phospho-beta-D-ribosyl)-5-[(5-phospho-beta-D-ribosylamino)methylideneamino]imidazole-4-carboxamide = 5-[(5-phospho-1-deoxy-D-ribulos-1-ylimino)methylamino]-1-(5-phospho-beta-D-ribosyl)imidazole-4-carboxamide. It participates in amino-acid biosynthesis; L-histidine biosynthesis; L-histidine from 5-phospho-alpha-D-ribose 1-diphosphate: step 4/9. The chain is 1-(5-phosphoribosyl)-5-[(5-phosphoribosylamino)methylideneamino] imidazole-4-carboxamide isomerase from Escherichia coli (strain 55989 / EAEC).